The primary structure comprises 155 residues: UBA-like domain-containing protein 1 (155 aa).

Residues 81-155 (KASESFNSSS…KASAAMEAER (75 aa)) form a disordered region. Low complexity predominate over residues 83-96 (SESFNSSSSPSMAT). Residues 112-127 (ANQQSLWTQGPSAQQT) show a composition bias toward polar residues. Residues 139–155 (QQAASEQKASAAMEAER) are compositionally biased toward low complexity.

Belongs to the UBALD family.

The chain is UBA-like domain-containing protein 1 (ubald1) from Danio rerio (Zebrafish).